The sequence spans 176 residues: Inner membrane-spanning protein YciB (176 aa).

The next 6 membrane-spanning stretches (helical) occupy residues 3-23 (FLFDLFPIILFFAAFKVWGIF), 24-44 (TATAVAIVATLAQVAWVAFRH), 49-69 (TMLWVSLGVIVVFGGATLVLH), 81-101 (LYWLFAIGLLAARYAFGNNLI), 119-139 (LNVAWALFFAVLGVANLYVVH), and 149-169 (FKLFGTTGAMVVFIILQSLWL).

This sequence belongs to the YciB family.

Its subcellular location is the cell inner membrane. Its function is as follows. Plays a role in cell envelope biogenesis, maintenance of cell envelope integrity and membrane homeostasis. The chain is Inner membrane-spanning protein YciB from Burkholderia ambifaria (strain MC40-6).